Here is a 671-residue protein sequence, read N- to C-terminus: MTPHSTHVTLDHEGIIQPPAEFKERSKSKPNLADFETYSKMYKESIENPSKFFGEQALEHLSWDRPFDEARYPVSSEQDFADGDIASWFVNGQLNASYNAVDRWAIKNPNKPAIIYEADEENEGRIITYGQLLKDVCKLAQCLTKLGIRKGDSVAVYLPMIPEALVTLLAIVRIGAVHSVVFAGFSSSSLKDRILDASSKIVITTDESKRGGKTIETKKIVDDALKNCPDVTNVLLFKRTGNAHIPFTEGRDLWWHEEMAKYGPYFPPVPVNSEDPLFLLYTSGSTGKPKGIQHSTAGYLLGAAMTSKYTFDVHEDDVLFTAGDVGWITGHTYVVYGPLLCGATTVVFEGTPAHPNYSRYWEIVDKYQVTQFYVAPTALRLLKRAGTKYIENYKLDSLRVLGSVGEPIAAEIWHWYNDNIGRRKCHIVDTYWQTESGSHMLAPLAGITPTKPGSASLPCFGIDAKILDPVSGKELKENDVEGVLCVKSCWPSISRGIYNDYARFIETYLKPYPNHYFSGDGAARDVDGFYWILGRVDDVVNVSGHRLSTAEIEAALILHESVAECAVVGYADELTGQAVAAYVSLKSNVSEDLEVIKKELILTVRKEIGPFATPKTILLVDDLPKTRSGKIMRRILRKVLAGEEDQLGDISTLSNPGVVAQIIDVVKATRK.

CoA contacts are provided by residues Arg-210–Lys-213 and Thr-329. Residues Gly-405 to Pro-407, Asp-429 to Thr-434, Asp-520, and Arg-535 contribute to the ATP site. Position 543 (Ser-543) interacts with CoA. Arg-546 is an ATP binding site. Arg-605 contributes to the CoA binding site.

This sequence belongs to the ATP-dependent AMP-binding enzyme family.

It carries out the reaction acetate + ATP + CoA = acetyl-CoA + AMP + diphosphate. This is Acetyl-coenzyme A synthetase 1 (ACS1) from Debaryomyces hansenii (strain ATCC 36239 / CBS 767 / BCRC 21394 / JCM 1990 / NBRC 0083 / IGC 2968) (Yeast).